The sequence spans 92 residues: Small ribosomal subunit protein uS19 (92 aa).

It belongs to the universal ribosomal protein uS19 family.

Its function is as follows. Protein S19 forms a complex with S13 that binds strongly to the 16S ribosomal RNA. This is Small ribosomal subunit protein uS19 from Shewanella amazonensis (strain ATCC BAA-1098 / SB2B).